The primary structure comprises 90 residues: Cuticle protein 9.5 (90 aa).

Functionally, component of the cuticle of migratory locust which contains more than 100 different structural proteins. This chain is Cuticle protein 9.5, found in Locusta migratoria (Migratory locust).